Reading from the N-terminus, the 394-residue chain is RILP-like protein 1 (394 aa).

The 88-residue stretch at 2–89 (EGISALEKNV…RLERMDRIEK (88 aa)) folds into the RH1 domain. Residues 68–327 (EMEELRLELD…EAEEENKLPQ (260 aa)) adopt a coiled-coil conformation. In terms of domain architecture, RH2 spans 282-347 (RPRFTLQELR…IPQESGIKRL (66 aa)).

The protein belongs to the RILPL family.

It is found in the cytoplasm. Its subcellular location is the cytosol. It localises to the cytoskeleton. The protein resides in the microtubule organizing center. The protein localises to the centrosome. It is found in the cell projection. Its subcellular location is the cilium. Plays a role in the regulation of cell shape and polarity. Plays a role in cellular protein transport, including protein transport away from primary cilia. Neuroprotective protein. The chain is RILP-like protein 1 (rilpl1) from Xenopus laevis (African clawed frog).